The primary structure comprises 860 residues: Translation initiation factor IF-2 (860 aa).

A compositionally biased stretch (basic and acidic residues) spans 1-11; sequence MSDTKSGDDKT. The tract at residues 1-265 is disordered; it reads MSDTKSGDDK…MRRRQEKFKR (265 aa). The segment covering 79 to 88 has biased composition (low complexity); the sequence is AAPVVQEAPK. Residues 110-183 are compositionally biased toward basic and acidic residues; that stretch reads SRSEMEARRR…RRRAEEEARR (74 aa). The 168-residue stretch at 358–525 folds into the tr-type G domain; it reads PRPPVVTIMG…AILLQAEILD (168 aa). The G1 stretch occupies residues 367 to 374; the sequence is GHVDHGKT. 367–374 contributes to the GTP binding site; sequence GHVDHGKT. The interval 392 to 396 is G2; that stretch reads GITQH. The segment at 413-416 is G3; sequence DTPG. GTP contacts are provided by residues 413–417 and 467–470; these read DTPGH and NKID. The interval 467–470 is G4; that stretch reads NKID. Residues 503–505 are G5; sequence SAT.

The protein belongs to the TRAFAC class translation factor GTPase superfamily. Classic translation factor GTPase family. IF-2 subfamily.

It is found in the cytoplasm. In terms of biological role, one of the essential components for the initiation of protein synthesis. Protects formylmethionyl-tRNA from spontaneous hydrolysis and promotes its binding to the 30S ribosomal subunits. Also involved in the hydrolysis of GTP during the formation of the 70S ribosomal complex. In Mesorhizobium japonicum (strain LMG 29417 / CECT 9101 / MAFF 303099) (Mesorhizobium loti (strain MAFF 303099)), this protein is Translation initiation factor IF-2.